Consider the following 436-residue polypeptide: Adenylosuccinate synthetase (436 aa).

GTP contacts are provided by residues 13–19 (GDEGKGK) and 41–43 (GHT). Aspartate 14 functions as the Proton acceptor in the catalytic mechanism. 2 residues coordinate Mg(2+): aspartate 14 and glycine 41. IMP contacts are provided by residues 14–17 (DEGK), 39–42 (NAGH), threonine 130, arginine 144, glutamine 225, threonine 240, and arginine 304. The active-site Proton donor is histidine 42. 300–306 (ATTGRSR) is a substrate binding site. GTP is bound by residues arginine 306, 332-334 (KLD), and 415-417 (STG).

This sequence belongs to the adenylosuccinate synthetase family. Homodimer. Mg(2+) serves as cofactor.

Its subcellular location is the cytoplasm. It catalyses the reaction IMP + L-aspartate + GTP = N(6)-(1,2-dicarboxyethyl)-AMP + GDP + phosphate + 2 H(+). Its pathway is purine metabolism; AMP biosynthesis via de novo pathway; AMP from IMP: step 1/2. Its function is as follows. Plays an important role in the de novo pathway of purine nucleotide biosynthesis. Catalyzes the first committed step in the biosynthesis of AMP from IMP. This Hamiltonella defensa subsp. Acyrthosiphon pisum (strain 5AT) protein is Adenylosuccinate synthetase.